The sequence spans 228 residues: Large ribosomal subunit protein uL3 (228 aa).

Belongs to the universal ribosomal protein uL3 family. Part of the 50S ribosomal subunit. Forms a cluster with proteins L14 and L19.

In terms of biological role, one of the primary rRNA binding proteins, it binds directly near the 3'-end of the 23S rRNA, where it nucleates assembly of the 50S subunit. This chain is Large ribosomal subunit protein uL3, found in Leuconostoc mesenteroides subsp. mesenteroides (strain ATCC 8293 / DSM 20343 / BCRC 11652 / CCM 1803 / JCM 6124 / NCDO 523 / NBRC 100496 / NCIMB 8023 / NCTC 12954 / NRRL B-1118 / 37Y).